The following is an 80-amino-acid chain: uncharacterized protein (80 aa).

This is an uncharacterized protein from Shigella flexneri.